A 672-amino-acid polypeptide reads, in one-letter code: Forkhead box protein O3 (672 aa).

Disordered stretches follow at residues 1–85 (MAEA…GVSS) and 110–152 (GPAS…CSSR). Phosphoserine is present on S30. The residue at position 32 (T32) is a Phosphothreonine. At K46 the chain carries N6-methyllysine. Over residues 57–68 (IPEEDDDEDDED) the composition is skewed to acidic residues. Residues 80-108 (GGGVSSTLGSGLLLEDSAMLLAPGGQDLG) form a required for mitochondrial import region. Low complexity predominate over residues 110–129 (GPASAAGALSGGTPTQLQPQ). K148 bears the N6-methyllysine mark. A DNA-binding region (fork-head) is located at residues 156 to 250 (WGNLSYADLI…KSGKAPRRRA (95 aa)). Position 178 is a phosphothreonine (T178). S208 and S214 each carry phosphoserine. K229 is subject to N6-methyllysine. Positions 230–301 (SSWWIINPDG…GSPTSRSSDE (72 aa)) are disordered. K241 carries the N6-acetyllysine modification. The Nuclear localization signal signature appears at 241 to 258 (KSGKAPRRRAVSMDNSNK). S252 is subject to Phosphoserine. A compositionally biased stretch (basic residues) spans 260-271 (TKSRGRAAKKKA). N6-methyllysine occurs at positions 261 and 270. S279 and S283 each carry phosphoserine. Polar residues predominate over residues 282–297 (DSPSQLSKWPGSPTSR). At K289 the chain carries N6-methyllysine. At S293 the chain carries Phosphoserine. The residue at position 298 (S298) is a Phosphoserine; by CaMK2A. Residues 299 to 672 (SDELDAWTDF…QASSQSWVPG (374 aa)) are mediates interaction with CHUK/IKKA and IKBKB/IKKB. Residue S310 is modified to Phosphoserine. S314 bears the Phosphoserine; by SGK1 mark. Phosphoserine; by AMPK is present on residues S398 and S412. Disordered stretches follow at residues 399–441 (QPSP…SLNS) and 535–583 (HQHQ…QTLS). Polar residues-rich tracts occupy residues 409–441 (RGSS…SLNS) and 548–577 (ALSN…PASQ). An N6-methyllysine modification is found at K418. Phosphoserine is present on S420. S550 is subject to Phosphoserine; by MAPKAPK5. S554 carries the phosphoserine; by AMPK and MAPKAPK5 modification. 2 positions are modified to phosphoserine; by AMPK: S587 and S625. Phosphoserine; by IKKB is present on S643.

In terms of assembly, upon metabolic stress, forms a complex composed of FOXO3, SIRT3 and mitochondrial RNA polymerase POLRMT; the complex is recruited to mtDNA in a SIRT3-dependent manner. Also forms a complex composed of FOXO3, SIRT3, TFAM and POLRMT. Interacts with SIRT2; the interaction occurs independently of SIRT2 deacetylase activity. Interacts with YWHAB/14-3-3-beta and YWHAZ/14-3-3-zeta, which are required for cytosolic sequestration. Upon oxidative stress, interacts with STK4/MST1, which disrupts interaction with YWHAB/14-3-3-beta and leads to nuclear translocation. Interacts with PIM1. Interacts with DDIT3/CHOP. Interacts (deacetylated form) with SKP2. Interacts with CHUK and IKBKB. Interacts with CAMK2A, CAMK2B and calcineurin A. Interacts with NUPR1; this interaction represses FOXO3 transactivation. In terms of processing, deacetylation by SIRT1 or SIRT2 stimulates interaction of FOXO3 with SKP2 and facilitates SCF(SKP2)-mediated FOXO3 ubiquitination and proteasomal degradation. Deacetylation by SIRT2 stimulates FOXO3-mediated transcriptional activity in response to oxidative stress. Deacetylated by SIRT3. Deacetylation by SIRT3 stimulates FOXO3-mediated mtDNA transcriptional activity in response to metabolic stress. In the presence of survival factors such as IGF1, phosphorylated on Thr-32 and Ser-252 by AKT1/PKB. This phosphorylated form then interacts with 14-3-3 proteins and is retained in the cytoplasm. Survival factor withdrawal induces dephosphorylation and promotes translocation to the nucleus where the dephosphorylated protein induces transcription of target genes and triggers apoptosis. Although AKT1/PKB doesn't appear to phosphorylate Ser-314 directly, it may activate other kinases that trigger phosphorylation at this residue. Phosphorylated by STK4/MST1 on Ser-208 upon oxidative stress, which leads to dissociation from YWHAB/14-3-3-beta and nuclear translocation. Phosphorylated by PIM1. Phosphorylation by AMPK leads to the activation of transcriptional activity without affecting subcellular localization. Phosphorylated by AMPK on Ser-30 in response to metabolic stress which mediates FOXO3 mitochondrial translocation. Phosphorylation by MAPKAPK5 promotes nuclear localization and DNA-binding, leading to induction of miR-34b and miR-34c expression, 2 post-transcriptional regulators of MYC that bind to the 3'UTR of MYC transcript and prevent its translation. Phosphorylated by CHUK/IKKA and IKBKB/IKKB. TNF-induced inactivation of FOXO3 requires its phosphorylation at Ser-643 by IKBKB/IKKB which promotes FOXO3 retention in the cytoplasm, polyubiquitination and ubiquitin-mediated proteasomal degradation. May be dephosphorylated by calcineurin A on Ser-298 which abolishes FOXO3 transcriptional activity. Phosphorylation at Ser-252 promotes its degradation by the proteasome. Dephosphorylation at Ser-252 by protein phosphatase 2A (PPP2CA) promotes its stabilization; interaction with PPP2CA is enhanced by AMBRA1. Post-translationally, heavily methylated by SET9 which decreases stability, while moderately increasing transcriptional activity. The main methylation site is Lys-270. Methylation doesn't affect subcellular location. In terms of processing, polyubiquitinated. Ubiquitinated by a SCF complex containing SKP2, leading to proteasomal degradation. The N-terminus is cleaved following import into the mitochondrion. In terms of tissue distribution, expressed in white and brown adipose tissues (at protein level). Expressed in liver, kidney, lung and colon (at protein level). Expressed in skeletal muscles (at protein level).

It localises to the cytoplasm. The protein resides in the cytosol. It is found in the nucleus. The protein localises to the mitochondrion matrix. Its subcellular location is the mitochondrion outer membrane. Functionally, transcriptional activator that recognizes and binds to the DNA sequence 5'-[AG]TAAA[TC]A-3' and regulates different processes, such as apoptosis and autophagy. Acts as a positive regulator of autophagy in skeletal muscle: in starved cells, enters the nucleus following dephosphorylation and binds the promoters of autophagy genes, such as GABARAP1L, MAP1LC3B and ATG12, thereby activating their expression, resulting in proteolysis of skeletal muscle proteins. Triggers apoptosis in the absence of survival factors, including neuronal cell death upon oxidative stress. Participates in post-transcriptional regulation of MYC: following phosphorylation by MAPKAPK5, promotes induction of miR-34b and miR-34c expression, 2 post-transcriptional regulators of MYC that bind to the 3'UTR of MYC transcript and prevent its translation. In response to metabolic stress, translocates into the mitochondria where it promotes mtDNA transcription. Also acts as a key regulator of chondrogenic commitment of skeletal progenitor cells in response to lipid availability: when lipids levels are low, translocates to the nucleus and promotes expression of SOX9, which induces chondrogenic commitment and suppresses fatty acid oxidation. Also acts as a key regulator of regulatory T-cells (Treg) differentiation by activating expression of FOXP3. This is Forkhead box protein O3 from Mus musculus (Mouse).